The chain runs to 670 residues: tRNA 5-methylaminomethyl-2-thiouridine biosynthesis bifunctional protein MnmC (670 aa).

The tract at residues 1-242 (MTFSVQHAEI…KRECLSGLKI (242 aa)) is tRNA (mnm(5)s(2)U34)-methyltransferase. Residues 269–670 (IGGGIASLCA…KKWLKGSKVE (402 aa)) form an FAD-dependent cmnm(5)s(2)U34 oxidoreductase region.

It in the N-terminal section; belongs to the methyltransferase superfamily. tRNA (mnm(5)s(2)U34)-methyltransferase family. The protein in the C-terminal section; belongs to the DAO family. FAD serves as cofactor.

It is found in the cytoplasm. It catalyses the reaction 5-aminomethyl-2-thiouridine(34) in tRNA + S-adenosyl-L-methionine = 5-methylaminomethyl-2-thiouridine(34) in tRNA + S-adenosyl-L-homocysteine + H(+). Functionally, catalyzes the last two steps in the biosynthesis of 5-methylaminomethyl-2-thiouridine (mnm(5)s(2)U) at the wobble position (U34) in tRNA. Catalyzes the FAD-dependent demodification of cmnm(5)s(2)U34 to nm(5)s(2)U34, followed by the transfer of a methyl group from S-adenosyl-L-methionine to nm(5)s(2)U34, to form mnm(5)s(2)U34. This is tRNA 5-methylaminomethyl-2-thiouridine biosynthesis bifunctional protein MnmC from Haemophilus influenzae (strain ATCC 51907 / DSM 11121 / KW20 / Rd).